The primary structure comprises 107 residues: Cell cycle protein GpsB (107 aa).

Residues L32 to S65 are a coiled coil. The interval K57–V80 is disordered. The segment covering N58–T68 has biased composition (polar residues).

The protein belongs to the GpsB family. Forms polymers through the coiled coil domains. Interacts with PBP1, MreC and EzrA.

The protein localises to the cytoplasm. In terms of biological role, divisome component that associates with the complex late in its assembly, after the Z-ring is formed, and is dependent on DivIC and PBP2B for its recruitment to the divisome. Together with EzrA, is a key component of the system that regulates PBP1 localization during cell cycle progression. Its main role could be the removal of PBP1 from the cell pole after pole maturation is completed. Also contributes to the recruitment of PBP1 to the division complex. Not essential for septum formation. The polypeptide is Cell cycle protein GpsB (Streptococcus uberis (strain ATCC BAA-854 / 0140J)).